A 570-amino-acid chain; its full sequence is Probable metalloreductase AIM14 (570 aa).

Transmembrane regions (helical) follow at residues 21–41 (IKYGYYVLIISLVYLIGLALL), 70–90 (AIHLGILFFAVLIPFYYHYSL), 101–118 (LGRLSYALIPLNLFLTLR), 142–162 (IITVIGLLHGIFFIIKWAIDD), 177–197 (FVGFIISILVLFLLICSIGPM), 204–224 (LFYIVHNLVNVAFILLTPIHS), and 230–250 (FPFLLLNCTLLFIHIINRIVF). A Ferric oxidoreductase domain is found at 101–219 (LGRLSYALIP…NLVNVAFILL (119 aa)). Positions 250–388 (FAKSLMILNK…GGSGISFALP (139 aa)) constitute an FAD-binding FR-type domain. Residues 481 to 505 (SNFNSENADSNDNTPETSHSPTKEN) are compositionally biased toward polar residues. The tract at residues 481–507 (SNFNSENADSNDNTPETSHSPTKENGS) is disordered.

Belongs to the ferric reductase (FRE) family. AIM14 subfamily. In terms of assembly, interacts with ribosomes.

It is found in the membrane. Its function is as follows. Probable cell surface metalloreductase. May be involved in iron or copper homeostasis. The protein is Probable metalloreductase AIM14 (AIM14) of Saccharomyces cerevisiae (strain YJM789) (Baker's yeast).